We begin with the raw amino-acid sequence, 63 residues long: Large ribosomal subunit protein uL29 (63 aa).

The protein belongs to the universal ribosomal protein uL29 family.

The sequence is that of Large ribosomal subunit protein uL29 from Aliarcobacter butzleri (strain RM4018) (Arcobacter butzleri).